We begin with the raw amino-acid sequence, 365 residues long: Anthranilate phosphoribosyltransferase (365 aa).

5-phospho-alpha-D-ribose 1-diphosphate-binding positions include Gly-96, 99 to 100, Thr-104, 106 to 109, 124 to 132, and Ser-136; these read GD, NIST, and KHGNRSVSS. Gly-96 is a binding site for anthranilate. A Mg(2+)-binding site is contributed by Ser-108. Asn-127 is a binding site for anthranilate. Arg-182 contacts anthranilate. Residues Asp-240 and Glu-241 each contribute to the Mg(2+) site.

The protein belongs to the anthranilate phosphoribosyltransferase family. Homodimer. Mg(2+) serves as cofactor.

The catalysed reaction is N-(5-phospho-beta-D-ribosyl)anthranilate + diphosphate = 5-phospho-alpha-D-ribose 1-diphosphate + anthranilate. It participates in amino-acid biosynthesis; L-tryptophan biosynthesis; L-tryptophan from chorismate: step 2/5. Its function is as follows. Catalyzes the transfer of the phosphoribosyl group of 5-phosphorylribose-1-pyrophosphate (PRPP) to anthranilate to yield N-(5'-phosphoribosyl)-anthranilate (PRA). The chain is Anthranilate phosphoribosyltransferase from Colwellia psychrerythraea (strain 34H / ATCC BAA-681) (Vibrio psychroerythus).